The chain runs to 376 residues: Alcohol dehydrogenase class-3 (376 aa).

An N-acetylalanine modification is found at Ala-1. The Zn(2+) site is built by Cys-47, His-69, Cys-99, Cys-102, Cys-105, Cys-113, and Cys-176.

It belongs to the zinc-containing alcohol dehydrogenase family. Class-III subfamily. As to quaternary structure, homodimer. Requires Zn(2+) as cofactor.

It is found in the cytoplasm. It catalyses the reaction a primary alcohol + NAD(+) = an aldehyde + NADH + H(+). The catalysed reaction is a secondary alcohol + NAD(+) = a ketone + NADH + H(+). The enzyme catalyses S-(hydroxymethyl)glutathione + NADP(+) = S-formylglutathione + NADPH + H(+). It carries out the reaction S-(hydroxymethyl)glutathione + NAD(+) = S-formylglutathione + NADH + H(+). It catalyses the reaction S-nitrosoglutathione + NADH + H(+) = S-(hydroxysulfenamide)glutathione + NAD(+). In terms of biological role, class-III ADH is remarkably ineffective in oxidizing ethanol, but it readily catalyzes the oxidation of long-chain primary alcohols and the oxidation of S-(hydroxymethyl) glutathione. Also acts as a S-nitroso-glutathione reductase by catalyzing the NADH-dependent reduction of S-nitrosoglutathione, thereby regulating protein S-nitrosylation. This is Alcohol dehydrogenase class-3 from Scyliorhinus canicula (Small-spotted catshark).